The sequence spans 379 residues: Putative acetyl-CoA C-acetyltransferase VraB (379 aa).

The active-site Acyl-thioester intermediate is the Cys86. His338 (proton acceptor) is an active-site residue.

The protein belongs to the thiolase-like superfamily. Thiolase family.

The sequence is that of Putative acetyl-CoA C-acetyltransferase VraB (vraB) from Staphylococcus aureus (strain COL).